A 391-amino-acid polypeptide reads, in one-letter code: AN1-type zinc finger and UBX domain-containing protein DDB_G0268260 (391 aa).

A compositionally biased stretch (low complexity) spans 1-16; it reads MQQQSPPTAPQQQQQQ. The tract at residues 1–20 is disordered; that stretch reads MQQQSPPTAPQQQQQQQRER. 2 AN1-type zinc fingers span residues 26–74 and 118–166; these read DHIG…QREN and APKS…IINS. Zn(2+)-binding residues include Cys-32, Cys-37, Cys-47, Cys-50, Cys-55, His-58, His-64, Cys-66, Cys-124, Cys-129, Cys-139, Cys-142, Cys-147, His-150, His-156, and Cys-158. A compositionally biased stretch (low complexity) spans 185–236; it reads NINNNINNNKNNNNNNNNNNNNNNNNNNNNNNNNNNNNNNNNNNNNNSNNNN. The disordered stretch occupies residues 185–240; the sequence is NINNNINNNKNNNNNNNNNNNNNNNNNNNNNNNNNNNNNNNNNNNNNSNNNNKLIY. A UBX domain is found at 278–356; sequence SSEEIGEIGI…GLLPVSTLYM (79 aa).

The chain is AN1-type zinc finger and UBX domain-containing protein DDB_G0268260 from Dictyostelium discoideum (Social amoeba).